Here is a 161-residue protein sequence, read N- to C-terminus: Nucleotide-binding protein xcc-b100_3818 (161 aa).

It belongs to the YajQ family.

Nucleotide-binding protein. The polypeptide is Nucleotide-binding protein xcc-b100_3818 (Xanthomonas campestris pv. campestris (strain B100)).